A 53-amino-acid polypeptide reads, in one-letter code: Conotoxin Cal6.31 (53 aa).

The N-terminal stretch at 1-24 (MKLTCVLIAAVLLLAVCQLDSADA) is a signal peptide. Disulfide bonds link Cys-29–Cys-43, Cys-36–Cys-47, and Cys-42–Cys-51.

Belongs to the conotoxin O1 superfamily. Expressed by the venom duct.

The protein localises to the secreted. Functionally, probable neurotoxin. This chain is Conotoxin Cal6.31, found in Californiconus californicus (California cone).